The sequence spans 164 residues: MQQPKRNFDLYKLITDKQIDFQVADLIQDEQSSFVSVRIYGQFKCFVPKSTIQEQLDKIKNLSSKELAKNKIFKFLSEYNKNNQKQDELSHDYYGYFKVQQHQFILNLENAQREASLAVDDFYFINGRIYKTNHDILILQAHHVYQMQKPTLQLLQAASEINQN.

As to quaternary structure, component of the telomerase holoenzyme complex, composed of the catalytic core (the catalytic subunit TERT, the telomerase RNA template component TER and TAP65/p65), which is associated with two heterotrimeric subcomplexes: (i) the replication protein A (RPA)-related subcomplex, composed of TEB1, RPA2/TEB2 and RPA3/TEB3 and (ii) the CST-like subcomplex, composed of TAP75/p75, TAP45/p45 and TAP19/p19. TEB1 and the CST-like subcomplex are tethered to the catalytic core by TAP50/p50.

It is found in the chromosome. The protein localises to the telomere. Component of a CST-like subcomplex of the holoenzyme telomerase ribonucleoprotein complex, which stimulates telomerase complementary-strand synthesis. Telomerase is an essential ribonucleoprotein enzyme that copies new telomeric repeats onto chromosome ends by repetitively synthesizing the short telomere-repeat sequence 5'-TTGGGG-3' using an RNA template component TER. The CST-like subcomplex (also named 7-4-1) binds telomeric single-stranded DNA and coordinates telomere G-strand and C-strand synthesis. The protein is Telomerase-associated protein of 19 kDa of Tetrahymena thermophila (strain SB210).